The sequence spans 383 residues: Corticosteroid-binding globulin (383 aa).

N-linked (GlcNAc...) asparagine glycosylation is found at N74 and N154. A cortisol-binding site is contributed by Q232. An N-linked (GlcNAc...) asparagine glycan is attached at N238. Q264 lines the cortisol pocket. N308 carries an N-linked (GlcNAc...) asparagine glycan. Position 371 (W371) interacts with cortisol.

Belongs to the serpin family. As to expression, produced and secreted by hepatocytes, but has also been identified in a number of glycocorticoid responsive cells (it is found in maternal lung, spleen, and ovary and fetal kidney).

It localises to the secreted. Functionally, major transport protein for glucocorticoids and progestins in the blood of almost all vertebrate species. The sequence is that of Corticosteroid-binding globulin (SERPINA6) from Oryctolagus cuniculus (Rabbit).